A 59-amino-acid chain; its full sequence is MTIAPITGTIKRRVIMDIVLGFSLGGVMASYWWWGFHMDKINKREKFYAELAERKKQEN.

Residues 2-8 (TIAPITG) are Mitochondrial matrix-facing. Residues 9 to 44 (TIKRRVIMDIVLGFSLGGVMASYWWWGFHMDKINKR) traverse the membrane as a helical segment. Residues 45–56 (EKFYAELAERKK) lie on the Mitochondrial intermembrane side of the membrane. A propeptide spans 57 to 59 (QEN) (removed in mature form).

Belongs to the fungal cytochrome c oxidase subunit 7a family. Component of the cytochrome c oxidase (complex IV, CIV), a multisubunit enzyme composed of 12 subunits. The complex is composed of a catalytic core of 3 subunits COX1, COX2 and COX3, encoded in the mitochondrial DNA, and 9 supernumerary subunits COX4, COX5A (or COX5B), COX6, COX7, COX8, COX9, COX12, COX13 and COX26, which are encoded in the nuclear genome. The complex exists as a monomer or a dimer and forms supercomplexes (SCs) in the inner mitochondrial membrane with a dimer of ubiquinol-cytochrome c oxidoreductase (cytochrome b-c1 complex, complex III, CIII), resulting in 2 different assemblies (supercomplexes III(2)IV and III(2)IV(2)).

Its subcellular location is the mitochondrion inner membrane. It functions in the pathway energy metabolism; oxidative phosphorylation. In terms of biological role, component of the cytochrome c oxidase, the last enzyme in the mitochondrial electron transport chain which drives oxidative phosphorylation. The respiratory chain contains 3 multisubunit complexes succinate dehydrogenase (complex II, CII), ubiquinol-cytochrome c oxidoreductase (cytochrome b-c1 complex, complex III, CIII) and cytochrome c oxidase (complex IV, CIV), that cooperate to transfer electrons derived from NADH and succinate to molecular oxygen, creating an electrochemical gradient over the inner membrane that drives transmembrane transport and the ATP synthase. Cytochrome c oxidase is the component of the respiratory chain that catalyzes the reduction of oxygen to water. Electrons originating from reduced cytochrome c in the intermembrane space (IMS) are transferred via the dinuclear copper A center (CU(A)) of COX2 and heme A of COX1 to the active site in COX1, a binuclear center (BNC) formed by heme A3 and copper B (CU(B)). The BNC reduces molecular oxygen to 2 water molecules using 4 electrons from cytochrome c in the IMS and 4 protons from the mitochondrial matrix. The sequence is that of Cytochrome c oxidase subunit 9, mitochondrial (COX9) from Saccharomyces cerevisiae (strain ATCC 204508 / S288c) (Baker's yeast).